A 358-amino-acid polypeptide reads, in one-letter code: Nicotinate-nucleotide--dimethylbenzimidazole phosphoribosyltransferase (358 aa).

The Proton acceptor role is filled by Glu313.

It belongs to the CobT family.

The catalysed reaction is 5,6-dimethylbenzimidazole + nicotinate beta-D-ribonucleotide = alpha-ribazole 5'-phosphate + nicotinate + H(+). The protein operates within nucleoside biosynthesis; alpha-ribazole biosynthesis; alpha-ribazole from 5,6-dimethylbenzimidazole: step 1/2. In terms of biological role, catalyzes the synthesis of alpha-ribazole-5'-phosphate from nicotinate mononucleotide (NAMN) and 5,6-dimethylbenzimidazole (DMB). This Corynebacterium glutamicum (strain ATCC 13032 / DSM 20300 / JCM 1318 / BCRC 11384 / CCUG 27702 / LMG 3730 / NBRC 12168 / NCIMB 10025 / NRRL B-2784 / 534) protein is Nicotinate-nucleotide--dimethylbenzimidazole phosphoribosyltransferase.